The chain runs to 390 residues: Succinate--CoA ligase [ADP-forming] subunit beta (390 aa).

The ATP-grasp domain occupies 9 to 244 (KEILKRYGVN…ETQTDTSENE (236 aa)). Residues K46, 53–55 (GRG), E99, L102, and E107 each bind ATP. Positions 199 and 213 each coordinate Mg(2+). Substrate contacts are provided by residues N264 and 321–323 (GIV).

This sequence belongs to the succinate/malate CoA ligase beta subunit family. As to quaternary structure, heterotetramer of two alpha and two beta subunits. It depends on Mg(2+) as a cofactor.

It catalyses the reaction succinate + ATP + CoA = succinyl-CoA + ADP + phosphate. The enzyme catalyses GTP + succinate + CoA = succinyl-CoA + GDP + phosphate. Its pathway is carbohydrate metabolism; tricarboxylic acid cycle; succinate from succinyl-CoA (ligase route): step 1/1. In terms of biological role, succinyl-CoA synthetase functions in the citric acid cycle (TCA), coupling the hydrolysis of succinyl-CoA to the synthesis of either ATP or GTP and thus represents the only step of substrate-level phosphorylation in the TCA. The beta subunit provides nucleotide specificity of the enzyme and binds the substrate succinate, while the binding sites for coenzyme A and phosphate are found in the alpha subunit. The protein is Succinate--CoA ligase [ADP-forming] subunit beta of Campylobacter curvus (strain 525.92).